A 311-amino-acid chain; its full sequence is L-lactate dehydrogenase (311 aa).

NAD(+) contacts are provided by residues valine 12, aspartate 33, lysine 38, tyrosine 63, and 77–78 (GA). Residues glutamine 80, arginine 86, and 118 to 121 (NPVD) each bind substrate. NAD(+) contacts are provided by residues 116-118 (VTN) and serine 141. 146-149 (DSAR) provides a ligand contact to substrate. Beta-D-fructose 1,6-bisphosphate contacts are provided by arginine 151 and histidine 166. The active-site Proton acceptor is histidine 173. Residue tyrosine 219 is modified to Phosphotyrosine. A substrate-binding site is contributed by threonine 228.

This sequence belongs to the LDH/MDH superfamily. LDH family. In terms of assembly, homotetramer.

It localises to the cytoplasm. The enzyme catalyses (S)-lactate + NAD(+) = pyruvate + NADH + H(+). The protein operates within fermentation; pyruvate fermentation to lactate; (S)-lactate from pyruvate: step 1/1. Its activity is regulated as follows. Allosterically activated by fructose 1,6-bisphosphate (FBP). In terms of biological role, catalyzes the conversion of lactate to pyruvate. The chain is L-lactate dehydrogenase from Thermoanaerobacter pseudethanolicus (strain ATCC 33223 / 39E) (Clostridium thermohydrosulfuricum).